Consider the following 170-residue polypeptide: Ribosome maturation factor RimM (170 aa).

Residues 95–168 (EDAYYYHEIV…IIKVQLMEGM (74 aa)) form the PRC barrel domain.

The protein belongs to the RimM family. Binds ribosomal protein uS19.

It localises to the cytoplasm. Its function is as follows. An accessory protein needed during the final step in the assembly of 30S ribosomal subunit, possibly for assembly of the head region. Essential for efficient processing of 16S rRNA. May be needed both before and after RbfA during the maturation of 16S rRNA. It has affinity for free ribosomal 30S subunits but not for 70S ribosomes. The chain is Ribosome maturation factor RimM from Oceanobacillus iheyensis (strain DSM 14371 / CIP 107618 / JCM 11309 / KCTC 3954 / HTE831).